Reading from the N-terminus, the 374-residue chain is Trehalose-phosphate phosphatase B (374 aa).

It belongs to the trehalose phosphatase family. The cofactor is a divalent metal cation. Expressed in flowers.

It catalyses the reaction alpha,alpha-trehalose 6-phosphate + H2O = alpha,alpha-trehalose + phosphate. The protein operates within glycan biosynthesis; trehalose biosynthesis. Functionally, removes the phosphate from trehalose 6-phosphate to produce free trehalose. Trehalose accumulation in plant may improve abiotic stress tolerance. This Arabidopsis thaliana (Mouse-ear cress) protein is Trehalose-phosphate phosphatase B (TPPB).